Consider the following 250-residue polypeptide: uncharacterized protein (250 aa).

Disordered regions lie at residues 85 to 107 (NQFPKQEPQTSTQPVNVQPQSEP) and 158 to 198 (EPVP…AKVP). Over residues 167 to 176 (PAVEQPQVKQ) the composition is skewed to low complexity.

This is an uncharacterized protein from Mycoplasma pneumoniae (strain ATCC 29342 / M129 / Subtype 1) (Mycoplasmoides pneumoniae).